The primary structure comprises 210 residues: UPF0301 protein M446_6268 (210 aa).

The protein belongs to the UPF0301 (AlgH) family.

This chain is UPF0301 protein M446_6268, found in Methylobacterium sp. (strain 4-46).